The sequence spans 581 residues: Transcription factor GTE2 (581 aa).

The disordered stretch occupies residues 130–153; it reads VKKTKTKKKKIGHGQKRSNPFATD. The segment covering 131-145 has biased composition (basic residues); that stretch reads KKTKTKKKKIGHGQK. A Bromo domain is found at 169–275; that stretch reads KVLKSMMTTC…SQFDVWFNPT (107 aa). Disordered stretches follow at residues 329 to 399 and 470 to 581; these read PLLP…KREM and KRQG…KEAP. Residues 346–365 are compositionally biased toward pro residues; sequence PSPPPSPVQPPPPPSPPPQP. An NET domain is found at 389–470; it reads PKAKDPNKRE…NYRKMASKIK (82 aa). 2 stretches are compositionally biased toward basic and acidic residues: residues 390 to 399 and 493 to 503; these read KAKDPNKREM and SAEKRGRKGGE. Residues 504–517 show a composition bias toward acidic residues; sequence AGEEDVDIGEDIPV. Low complexity predominate over residues 530 to 564; it reads TAAAASGGSSSSGSFSSSGSSSSSDSESGSSSGSD.

It is found in the nucleus. The sequence is that of Transcription factor GTE2 (GTE2) from Arabidopsis thaliana (Mouse-ear cress).